The primary structure comprises 204 residues: Dephospho-CoA kinase (204 aa).

The 192-residue stretch at 13 to 204 folds into the DPCK domain; it reads RIGLTGGIAS…LWKNTIKKLV (192 aa). 21–26 serves as a coordination point for ATP; that stretch reads ASGKST.

This sequence belongs to the CoaE family.

Its subcellular location is the cytoplasm. The enzyme catalyses 3'-dephospho-CoA + ATP = ADP + CoA + H(+). The protein operates within cofactor biosynthesis; coenzyme A biosynthesis; CoA from (R)-pantothenate: step 5/5. In terms of biological role, catalyzes the phosphorylation of the 3'-hydroxyl group of dephosphocoenzyme A to form coenzyme A. In Prochlorococcus marinus subsp. pastoris (strain CCMP1986 / NIES-2087 / MED4), this protein is Dephospho-CoA kinase.